Here is a 134-residue protein sequence, read N- to C-terminus: Large ribosomal subunit protein bL19 (134 aa).

Positions 108 to 134 are disordered; it reads KSARIVERSDRSDKAKAQKAAAATAAE. A compositionally biased stretch (basic and acidic residues) spans 111–123; that stretch reads RIVERSDRSDKAK. A compositionally biased stretch (low complexity) spans 125–134; the sequence is QKAAAATAAE.

The protein belongs to the bacterial ribosomal protein bL19 family.

In terms of biological role, this protein is located at the 30S-50S ribosomal subunit interface and may play a role in the structure and function of the aminoacyl-tRNA binding site. This Methylorubrum extorquens (strain PA1) (Methylobacterium extorquens) protein is Large ribosomal subunit protein bL19.